A 307-amino-acid chain; its full sequence is Atrochrysone carboxyl ACP thioesterase (307 aa).

4 residues coordinate Zn(2+): His-104, His-106, Asp-108, and His-109. Asp-108 (proton donor/acceptor) is an active-site residue.

Belongs to the metallo-beta-lactamase superfamily. It depends on Zn(2+) as a cofactor.

It catalyses the reaction atrochrysone carboxyl-[ACP] + H2O = atrochrysone carboxylate + holo-[ACP] + H(+). Its pathway is secondary metabolite biosynthesis. In terms of biological role, atrochrysone carboxyl ACP thioesterase; part of the gene cluster that mediates the biosynthesis of monodictyphenone, a prenyl xanthone derivative. The pathway begins with the synthesis of atrochrysone thioester by the polyketide synthase (PKS) mdpG. The atrochrysone carboxyl ACP thioesterase mdpF then breaks the thioester bond and releases the atrochrysone carboxylic acid from mdpG. The atrochrysone carboxylic acid is then converted to atrochrysone which is further transformed into emodin anthrone. The next step is performed by the anthrone oxygenase mdpH that catalyzes the oxidation of emodinanthrone to emodin. Emodin is further modified to yield monodictyphenone via several steps involving mdpB, mdpC mdpJ, mdpK and mdpL. The short chain dehydrogenase mdpC converts the tautomers of emodin hydroquinone into the 3-hydroxy-3,4-dihydroan-thracen-1(2H)-one derivative. These enzymes with xptA, xptB and xptC are also proposed to be involved in the synthesis of shamixanthone from emodin. Especially, direct reduction of emodin by the short chain dehydrogenase mdpC followed by dehydration catalyzed by the scytalone dehydratase-like protein mdpB gives loss of oxygen and formation of chrysophanol intermediate in two simple steps. This is Atrochrysone carboxyl ACP thioesterase from Emericella nidulans (strain FGSC A4 / ATCC 38163 / CBS 112.46 / NRRL 194 / M139) (Aspergillus nidulans).